A 187-amino-acid chain; its full sequence is Elongation factor P (187 aa).

It belongs to the elongation factor P family.

It is found in the cytoplasm. Its pathway is protein biosynthesis; polypeptide chain elongation. Involved in peptide bond synthesis. Stimulates efficient translation and peptide-bond synthesis on native or reconstituted 70S ribosomes in vitro. Probably functions indirectly by altering the affinity of the ribosome for aminoacyl-tRNA, thus increasing their reactivity as acceptors for peptidyl transferase. In Mycobacterium bovis (strain ATCC BAA-935 / AF2122/97), this protein is Elongation factor P (efp).